Here is a 181-residue protein sequence, read N- to C-terminus: Mating-type protein A1 (181 aa).

Residues 122–181 (DKKKRRHIPESSKELLEKAFKVKRFPNSKERERIARECGISPLQVRVWFTNKRARSKSRA) constitute a DNA-binding region (homeobox).

Belongs to the MATA1 family.

The protein resides in the nucleus. Functionally, mating type proteins are sequence specific DNA-binding proteins that act as master switches in yeast differentiation by controlling gene expression in a cell type-specific fashion. This chain is Mating-type protein A1 (MATA1), found in Pichia angusta (Yeast).